The chain runs to 167 residues: uncharacterized protein (167 aa).

In terms of domain architecture, N-acetyltransferase spans 1-148; sequence MLIRVEIPID…SAFQVHRLAD (148 aa).

The protein belongs to the acetyltransferase family.

This is an uncharacterized protein from Escherichia coli O157:H7.